A 273-amino-acid chain; its full sequence is Dermonecrotic toxin LsaSicTox-alphaIB1bii (273 aa).

The active site involves H5. Mg(2+) contacts are provided by E25 and D27. The active-site Nucleophile is the H41. 2 cysteine pairs are disulfide-bonded: C45-C51 and C47-C190. D85 lines the Mg(2+) pocket.

It belongs to the arthropod phospholipase D family. Class II subfamily. Mg(2+) serves as cofactor. Expressed by the venom gland.

It localises to the secreted. The enzyme catalyses an N-(acyl)-sphingosylphosphocholine = an N-(acyl)-sphingosyl-1,3-cyclic phosphate + choline. The catalysed reaction is an N-(acyl)-sphingosylphosphoethanolamine = an N-(acyl)-sphingosyl-1,3-cyclic phosphate + ethanolamine. It carries out the reaction a 1-acyl-sn-glycero-3-phosphocholine = a 1-acyl-sn-glycero-2,3-cyclic phosphate + choline. It catalyses the reaction a 1-acyl-sn-glycero-3-phosphoethanolamine = a 1-acyl-sn-glycero-2,3-cyclic phosphate + ethanolamine. Its function is as follows. Dermonecrotic toxins cleave the phosphodiester linkage between the phosphate and headgroup of certain phospholipids (sphingolipid and lysolipid substrates), forming an alcohol (often choline) and a cyclic phosphate. This toxin acts on sphingomyelin (SM). It may also act on ceramide phosphoethanolamine (CPE), lysophosphatidylcholine (LPC) and lysophosphatidylethanolamine (LPE), but not on lysophosphatidylserine (LPS), and lysophosphatidylglycerol (LPG). It acts by transphosphatidylation, releasing exclusively cyclic phosphate products as second products. Induces dermonecrosis, hemolysis, increased vascular permeability, edema, inflammatory response, and platelet aggregation. The polypeptide is Dermonecrotic toxin LsaSicTox-alphaIB1bii (Loxosceles sabina (Tucson recluse spider)).